The sequence spans 698 residues: FHF complex subunit HOOK-interacting protein 2B (698 aa).

The protein belongs to the FHIP family.

This Xenopus tropicalis (Western clawed frog) protein is FHF complex subunit HOOK-interacting protein 2B (fhip2b).